Consider the following 44-residue polypeptide: Protein PsbN (44 aa).

A helical transmembrane segment spans residues phenylalanine 6–isoleucine 26.

The protein belongs to the PsbN family.

The protein localises to the plastid. It is found in the chloroplast thylakoid membrane. In terms of biological role, may play a role in photosystem I and II biogenesis. The polypeptide is Protein PsbN (Ostreococcus tauri).